A 210-amino-acid chain; its full sequence is Imidazoleglycerol-phosphate dehydratase (210 aa).

The interval 185–210 (PRRGGSIPSSKGVLEQAGDNNTEKSK) is disordered.

Belongs to the imidazoleglycerol-phosphate dehydratase family.

The protein localises to the cytoplasm. The catalysed reaction is D-erythro-1-(imidazol-4-yl)glycerol 3-phosphate = 3-(imidazol-4-yl)-2-oxopropyl phosphate + H2O. It participates in amino-acid biosynthesis; L-histidine biosynthesis; L-histidine from 5-phospho-alpha-D-ribose 1-diphosphate: step 6/9. The chain is Imidazoleglycerol-phosphate dehydratase from Prochlorococcus marinus (strain SARG / CCMP1375 / SS120).